The following is a 427-amino-acid chain: UDP-N-acetylglucosamine--N-acetylmuramyl-(pentapeptide) pyrophosphoryl-undecaprenol N-acetylglucosamine transferase (427 aa).

Residues 29-31, Asn-141, Arg-177, Ser-205, Ile-258, and Gln-303 each bind UDP-N-acetyl-alpha-D-glucosamine; that span reads TGG. Positions 408–427 are disordered; that stretch reads SLHPIPDSRFPIRTSAGGAQ.

Belongs to the glycosyltransferase 28 family. MurG subfamily.

Its subcellular location is the cell inner membrane. It catalyses the reaction di-trans,octa-cis-undecaprenyl diphospho-N-acetyl-alpha-D-muramoyl-L-alanyl-D-glutamyl-meso-2,6-diaminopimeloyl-D-alanyl-D-alanine + UDP-N-acetyl-alpha-D-glucosamine = di-trans,octa-cis-undecaprenyl diphospho-[N-acetyl-alpha-D-glucosaminyl-(1-&gt;4)]-N-acetyl-alpha-D-muramoyl-L-alanyl-D-glutamyl-meso-2,6-diaminopimeloyl-D-alanyl-D-alanine + UDP + H(+). Its pathway is cell wall biogenesis; peptidoglycan biosynthesis. Cell wall formation. Catalyzes the transfer of a GlcNAc subunit on undecaprenyl-pyrophosphoryl-MurNAc-pentapeptide (lipid intermediate I) to form undecaprenyl-pyrophosphoryl-MurNAc-(pentapeptide)GlcNAc (lipid intermediate II). This Xanthomonas campestris pv. campestris (strain 8004) protein is UDP-N-acetylglucosamine--N-acetylmuramyl-(pentapeptide) pyrophosphoryl-undecaprenol N-acetylglucosamine transferase.